Here is a 239-residue protein sequence, read N- to C-terminus: Tumor protein p53-inducible nuclear protein 1 (239 aa).

Positions 25 to 37 (EKEDDEWILVDFI) match the LIR motif.

As to quaternary structure, interacts with p53/TP53 and HIPK2. Interacts with PRKCG, GABARAP, GABARAPL1, GABARAPL2, MAP1LC3A, MAP1LC3B and MAP1LC3C. In terms of tissue distribution, ubiquitously expressed with highest levels in the thymus.

It is found in the cytoplasm. Its subcellular location is the cytosol. It localises to the nucleus. The protein resides in the PML body. The protein localises to the cytoplasmic vesicle. It is found in the autophagosome. Functionally, antiproliferative and proapoptotic protein involved in cell stress response which acts as a dual regulator of transcription and autophagy. Acts as a positive regulator of autophagy. In response to cellular stress or activation of autophagy, relocates to autophagosomes where it interacts with autophagosome-associated proteins GABARAP, GABARAPL1/L2, MAP1LC3A/B/C and regulates autophagy. Acts as an antioxidant and plays a major role in p53/TP53-driven oxidative stress response. Possesses both a p53/TP53-independent intracellular reactive oxygen species (ROS) regulatory function and a p53/TP53-dependent transcription regulatory function. Positively regulates p53/TP53 and p73/TP73 and stimulates their capacity to induce apoptosis and regulate cell cycle. In response to double-strand DNA breaks, promotes p53/TP53 phosphorylation on 'Ser-46' and subsequent apoptosis. Acts as a tumor suppressor by inducing cell death by an autophagy and caspase-dependent mechanism. Can reduce cell migration by regulating the expression of SPARC. In Mus musculus (Mouse), this protein is Tumor protein p53-inducible nuclear protein 1 (Trp53inp1).